The chain runs to 456 residues: MTKTLPPVTVIGGGLAGTEAAWQIAQAGVPVTLYEMRPVQKSPAHHTADLAELVCSNSFGAASSDRAAGLLHEELRRLQSVIISTADQHRVPAGGALAVDRGVFSQDLTQKLAEHPLVTFRREPLDQIPSEGITVLATGPLTTAALATELQQFTGLEYMSFFDAASPIIVGESINQDIAFLASRYDKGEAAYLNCPMDPAQYQAFRAALCEAEQAELKDFELETAKFFEGCLPIEELARRGEDTMRFGPLKPVGLFDARLGDFRAPENKGKRPYAVVQLRQEDKQGQLWNMVGFQTNLRWGEQKRVFRMIPGLENAEFVRMGVMHRNTFLNSPELLEATLQFKKRPTLLAAGQLIGTEGYTAAAAGGWLAGTNAARLAQGLTPLTLPETTMMGALFEFIHSASPKHFQPMPPNFGIIPPLAERVRSKKERYGVYRDRSLTDLEQWREESCRPAALV.

12–17 (GGGLAG) is a binding site for FAD.

Belongs to the MnmG family. TrmFO subfamily. FAD serves as cofactor.

It localises to the cytoplasm. It carries out the reaction uridine(54) in tRNA + (6R)-5,10-methylene-5,6,7,8-tetrahydrofolate + NADH + H(+) = 5-methyluridine(54) in tRNA + (6S)-5,6,7,8-tetrahydrofolate + NAD(+). The catalysed reaction is uridine(54) in tRNA + (6R)-5,10-methylene-5,6,7,8-tetrahydrofolate + NADPH + H(+) = 5-methyluridine(54) in tRNA + (6S)-5,6,7,8-tetrahydrofolate + NADP(+). Functionally, catalyzes the folate-dependent formation of 5-methyl-uridine at position 54 (M-5-U54) in all tRNAs. The sequence is that of Methylenetetrahydrofolate--tRNA-(uracil-5-)-methyltransferase TrmFO from Picosynechococcus sp. (strain ATCC 27264 / PCC 7002 / PR-6) (Agmenellum quadruplicatum).